Reading from the N-terminus, the 260-residue chain is Putative hydro-lyase Bmul_5125/BMULJ_03391 (260 aa).

The protein belongs to the D-glutamate cyclase family.

The sequence is that of Putative hydro-lyase Bmul_5125/BMULJ_03391 from Burkholderia multivorans (strain ATCC 17616 / 249).